Reading from the N-terminus, the 367-residue chain is Probable ATP-dependent RNA helicase MJ0669 (367 aa).

The short motif at 6 to 34 (MNFNELNLSDNILNAIRNKGFEKPTDIQM) is the Q motif element. The Helicase ATP-binding domain maps to 38-206 (PLFLNDEYNI…KKYMGDYSFI (169 aa)). 51–58 (ARTGSGKT) is an ATP binding site. The short motif at 154 to 157 (DEAD) is the DEAD box element. One can recognise a Helicase C-terminal domain in the interval 213–367 (NIEQSYVEVN…KLKIKKLKFG (155 aa)).

The protein belongs to the DEAD box helicase family. As to quaternary structure, homodimer.

The catalysed reaction is ATP + H2O = ADP + phosphate + H(+). This is Probable ATP-dependent RNA helicase MJ0669 from Methanocaldococcus jannaschii (strain ATCC 43067 / DSM 2661 / JAL-1 / JCM 10045 / NBRC 100440) (Methanococcus jannaschii).